A 494-amino-acid polypeptide reads, in one-letter code: MTTVRTRIAPSPTGDPHVGTAYIALFNLCFARQHGGQFILRIEDTDQLRSTRESEQQIYDALRWLGIEWDEGPDVGGPHGPYRQSERGHIYKRYSDELVEKGHAFTCFCTPERLDAVRAEQMARKETPRYDGHCMHLPKDEVQRRLAAGESHVTRMKVPTEGVCVVPDMLRGDVEIPWDRMDMQVLMKADGLPTYFLANVVDDHLMGITHVLRGEEWLPSAPKLIKLYEYFGWEQPQLCYMPLLRNPDKSKLSKRKNPTSITFYERMGYLPQALLNYLGRMGWSMPDEREKFTLAEMIEHFDLSRVSLGGPIFDLEKLSWLNGQWIREQSVEEFAREVQKWALNPEYLMKIAPHVQGRVENFSQIAPLAGFFFSGGVPLDASLFEHKKLDPTQVRQVLQLVLWKLESLRQWEKERITGCIQAVAEHLQLKLRDVMPLMFPAITGHASSVSVLDAMEILGADLSRYRLRQALELLGGASKKETKEWEKIRDAIPG.

A 'HIGH' region motif is present at residues 10–20; it reads PSPTGDPHVGT. The Zn(2+) site is built by Cys107, Cys109, Cys134, and His136. A 'KMSKS' region motif is present at residues 251–255; that stretch reads KLSKR. Residue Lys254 participates in ATP binding.

The protein belongs to the class-I aminoacyl-tRNA synthetase family. Glutamate--tRNA ligase type 1 subfamily. Monomer. Zn(2+) is required as a cofactor.

It localises to the cytoplasm. It catalyses the reaction tRNA(Glu) + L-glutamate + ATP = L-glutamyl-tRNA(Glu) + AMP + diphosphate. Its function is as follows. Catalyzes the attachment of glutamate to tRNA(Glu) in a two-step reaction: glutamate is first activated by ATP to form Glu-AMP and then transferred to the acceptor end of tRNA(Glu). This chain is Glutamate--tRNA ligase, found in Pseudomonas aeruginosa (strain UCBPP-PA14).